A 593-amino-acid polypeptide reads, in one-letter code: ATP-dependent RNA helicase dbp6 (593 aa).

Residues 1 to 11 (MKDADDSEEVK) are compositionally biased toward acidic residues. Positions 1 to 103 (MKDADDSEEV…PEQDEMPTYS (103 aa)) are disordered. The segment covering 48-68 (KFERSKKARELEKTRESTKDE) has biased composition (basic and acidic residues). The segment covering 84 to 93 (LEPLPQPEAA) has biased composition (low complexity). Positions 121 to 149 (RKFADLGIDSSLLRVLEDNGYREAFAVQS) match the Q motif motif. Residues 157–361 (QGPTNHPGDL…SLRLANPKLV (205 aa)) enclose the Helicase ATP-binding domain. Residue 170–177 (AATGSGKT) participates in ATP binding. The DEAD box motif lies at 285–288 (DEAD). Positions 407-563 (LLRLLLSHIK…KVQFKLDNMK (157 aa)) constitute a Helicase C-terminal domain.

The protein belongs to the DEAD box helicase family. DDX51/DBP6 subfamily. In terms of assembly, associated with pre-ribosomal particles.

It is found in the nucleus. It localises to the nucleolus. The enzyme catalyses ATP + H2O = ADP + phosphate + H(+). ATP-binding RNA helicase involved in the biogenesis of 60S ribosomal subunits and is required for the normal formation of 25S and 5.8S rRNAs. The protein is ATP-dependent RNA helicase dbp6 (dbp6) of Aspergillus niger (strain ATCC MYA-4892 / CBS 513.88 / FGSC A1513).